The chain runs to 615 residues: DNA mismatch repair protein MutL (615 aa).

A disordered region spans residues 363–397 (FAEPAAREPVAPRYTPAPASGSRPAAPWPNAQPGY). Positions 364–391 (AEPAAREPVAPRYTPAPASGSRPAAPWP) are enriched in low complexity.

It belongs to the DNA mismatch repair MutL/HexB family.

In terms of biological role, this protein is involved in the repair of mismatches in DNA. It is required for dam-dependent methyl-directed DNA mismatch repair. May act as a 'molecular matchmaker', a protein that promotes the formation of a stable complex between two or more DNA-binding proteins in an ATP-dependent manner without itself being part of a final effector complex. This chain is DNA mismatch repair protein MutL, found in Shigella boydii serotype 18 (strain CDC 3083-94 / BS512).